Consider the following 115-residue polypeptide: U3-lycotoxin-Ls1h (115 aa).

A signal peptide spans 1–20; sequence MKFVLLFGVFLVTLFSYSSA. Residues 21 to 44 constitute a propeptide that is removed on maturation; that stretch reads EMLDDFDQADEDELLSLIEKEEAR. 4 disulfides stabilise this stretch: C48–C63, C55–C72, C62–C87, and C74–C85.

This sequence belongs to the neurotoxin 19 (CSTX) family. 01 subfamily. As to expression, expressed by the venom gland.

It is found in the secreted. The polypeptide is U3-lycotoxin-Ls1h (Lycosa singoriensis (Wolf spider)).